We begin with the raw amino-acid sequence, 1061 residues long: E3 ubiquitin-protein ligase Smurf1 (1061 aa).

The region spanning 1 to 116 is the C2 domain; sequence MNKLDYPRRN…KGAGFQRLDL (116 aa). Disordered regions lie at residues 143-176 and 188-496; these read SGNPLAIVGPSGDVRGPSEDDSSEDSLPEGWEER and HATK…SGQR. Positions 167–200 constitute a WW 1 domain; sequence DSLPEGWEERRTDNGRVYYVNHATKSTQWDRPRQ. Composition is skewed to polar residues over residues 207-225 and 233-255; these read SHATSPQQRHNTHNGNSGD and TRSTTCTNLMNNGHRSRDLSVTA. Ser262 carries the post-translational modification Phosphoserine. A compositionally biased stretch (polar residues) spans 264 to 273; that stretch reads EILSSVGKEN. Low complexity-rich tracts occupy residues 274-300 and 311-322; these read TSPTTPVSATTTPGKKTSSSNSSSAGG and PATPTSSTTSAS. Polar residues predominate over residues 348 to 359; the sequence is TPTSPTGQQNYV. A compositionally biased stretch (low complexity) spans 360–378; it reads NGNAQNGSTSGNGSGQAAQ. Over residues 379-392 the composition is skewed to polar residues; that stretch reads PQSASNGWTQEDAA. The span at 393–409 shows a compositional bias: low complexity; it reads TTTSPSTTTSPPRHSQS. Thr412 is subject to Phosphothreonine. Ser416 is subject to Phosphoserine. A compositionally biased stretch (polar residues) spans 417-439; that stretch reads PPASVTPSANGNVHSPNANSTPA. The span at 480–494 shows a compositional bias: gly residues; the sequence is RNGGTSGGGGGGGSG. WW domains are found at residues 513–546 and 561–594; these read LDLPPGYEMRTTQQGQVYFYHIPTGVSTWHDPRI and GPLPSGWEQRKTASGRVYFVDHNNRTTQFTDPRL. The interaction with MAD stretch occupies residues 513–602; it reads LDLPPGYEMR…RLSGSILQMI (90 aa). Low complexity-rich tracts occupy residues 608-617 and 624-656; these read PPTSAANAGT and TPATPSAAAAVPPQATPASNATPTTLTTTTNPP. A disordered region spans residues 608–661; it reads PPTSAANAGTPAPPSATPATPSAAAAVPPQATPASNATPTTLTTTTNPPHRIVP. The HECT domain maps to 723–1061; sequence RAKDMRKRLM…VEETCGFAVE (339 aa). The active-site Glycyl thioester intermediate is the Cys1029.

As to quaternary structure, interacts with phosphorylated MAD.

The catalysed reaction is S-ubiquitinyl-[E2 ubiquitin-conjugating enzyme]-L-cysteine + [acceptor protein]-L-lysine = [E2 ubiquitin-conjugating enzyme]-L-cysteine + N(6)-ubiquitinyl-[acceptor protein]-L-lysine.. Its pathway is protein modification; protein ubiquitination. E3 ubiquitin-protein ligase which accepts ubiquitin from an E2 ubiquitin-conjugating enzyme in the form of a thioester and then directly transfers the ubiquitin to targeted substrates. Down-regulates Dpp signaling after gastrulation by promoting MAD ubiquitination and subsequent degradation. The sequence is that of E3 ubiquitin-protein ligase Smurf1 from Drosophila melanogaster (Fruit fly).